The sequence spans 409 residues: Argininosuccinate synthase (409 aa).

ATP-binding positions include 12 to 20 and Ala39; that span reads AYSGGLDTS. Tyr91 is an L-citrulline binding site. Gly121 lines the ATP pocket. Positions 123, 127, and 128 each coordinate L-aspartate. An L-citrulline-binding site is contributed by Asn127. Residues Arg131, Ser180, Ser189, Glu265, and Tyr277 each contribute to the L-citrulline site.

This sequence belongs to the argininosuccinate synthase family. Type 1 subfamily. In terms of assembly, homotetramer.

It is found in the cytoplasm. The enzyme catalyses L-citrulline + L-aspartate + ATP = 2-(N(omega)-L-arginino)succinate + AMP + diphosphate + H(+). Its pathway is amino-acid biosynthesis; L-arginine biosynthesis; L-arginine from L-ornithine and carbamoyl phosphate: step 2/3. The polypeptide is Argininosuccinate synthase (Buchnera aphidicola subsp. Baizongia pistaciae (strain Bp)).